A 159-amino-acid chain; its full sequence is 2-C-methyl-D-erythritol 2,4-cyclodiphosphate synthase (159 aa).

The a divalent metal cation site is built by aspartate 8 and histidine 10. Residues 8-10 (DVH) and 34-35 (HS) contribute to the 4-CDP-2-C-methyl-D-erythritol 2-phosphate site. Residue histidine 42 participates in a divalent metal cation binding. Residues 56–58 (DIG), 61–65 (FPDTD), 100–106 (AQAPKML), 132–135 (TTTE), phenylalanine 139, and arginine 142 contribute to the 4-CDP-2-C-methyl-D-erythritol 2-phosphate site.

It belongs to the IspF family. Homotrimer. A divalent metal cation serves as cofactor.

It carries out the reaction 4-CDP-2-C-methyl-D-erythritol 2-phosphate = 2-C-methyl-D-erythritol 2,4-cyclic diphosphate + CMP. It participates in isoprenoid biosynthesis; isopentenyl diphosphate biosynthesis via DXP pathway; isopentenyl diphosphate from 1-deoxy-D-xylulose 5-phosphate: step 4/6. Its function is as follows. Involved in the biosynthesis of isopentenyl diphosphate (IPP) and dimethylallyl diphosphate (DMAPP), two major building blocks of isoprenoid compounds. Catalyzes the conversion of 4-diphosphocytidyl-2-C-methyl-D-erythritol 2-phosphate (CDP-ME2P) to 2-C-methyl-D-erythritol 2,4-cyclodiphosphate (ME-CPP) with a corresponding release of cytidine 5-monophosphate (CMP). In Salmonella arizonae (strain ATCC BAA-731 / CDC346-86 / RSK2980), this protein is 2-C-methyl-D-erythritol 2,4-cyclodiphosphate synthase.